The primary structure comprises 268 residues: Lipopolysaccharide core heptose(I) kinase WaaP (268 aa).

Tyr30, Tyr48, and Tyr98 each carry phosphotyrosine; by autocatalysis. Asp163 is a catalytic residue. Phosphotyrosine; by autocatalysis is present on residues Tyr165, Tyr211, Tyr231, Tyr258, and Tyr264.

This sequence belongs to the protein kinase superfamily. KdkA/RfaP family. As to quaternary structure, interacts with acyl-AcpP. The WaaP hydrophobic channel can accommodate acyl chains of different lengths, but myristyl-ACP is likely its physiological binding partner. Mg(2+) is required as a cofactor.

The protein resides in the cytoplasm. The enzyme catalyses an L-alpha-D-Hep-(1-&gt;3)-L-alpha-D-Hep-(1-&gt;5)-[alpha-Kdo-(2-&gt;4)]-alpha-Kdo-(2-&gt;6)-lipid A + ATP = an L-alpha-D-Hep-(1-&gt;3)-4-O-phospho-L-alpha-D-Hep-(1-&gt;5)-[alpha-Kdo-(2-&gt;4)]-alpha-Kdo-(2-&gt;6)-lipid A + ADP + H(+). The catalysed reaction is L-tyrosyl-[protein] + ATP = O-phospho-L-tyrosyl-[protein] + ADP + H(+). The protein operates within bacterial outer membrane biogenesis; LPS core biosynthesis. Its activity is regulated as follows. Acylated-acyl carrier protein (acyl-ACP) acts as a very tightly bound cofactor necessary for the production and stability of active WaaP kinase. Kinase involved in the biosynthesis of the core oligosaccharide region of lipopolysaccharide (LPS). Catalyzes the phosphorylation of heptose I (HepI), the first heptose added to the Kdo2-lipid A module. Also has protein-tyrosine kinase activity: autophosphorylates on all Tyr residues; in vitro can phosphorylate poly(Glu,Tyr). The chain is Lipopolysaccharide core heptose(I) kinase WaaP from Pseudomonas aeruginosa (strain ATCC 15692 / DSM 22644 / CIP 104116 / JCM 14847 / LMG 12228 / 1C / PRS 101 / PAO1).